An 83-amino-acid polypeptide reads, in one-letter code: RNA-binding protein Hfq (83 aa).

In terms of domain architecture, Sm spans 9–68 (DPFLNALRKERIPVSIYLVNGIKLQGQVESFDQFVILLKNTVSQMVYKHAISTVVPSRAL).

The protein belongs to the Hfq family. In terms of assembly, homohexamer.

In terms of biological role, RNA chaperone that binds small regulatory RNA (sRNAs) and mRNAs to facilitate mRNA translational regulation in response to envelope stress, environmental stress and changes in metabolite concentrations. Also binds with high specificity to tRNAs. In Pseudoalteromonas atlantica (strain T6c / ATCC BAA-1087), this protein is RNA-binding protein Hfq.